Here is a 313-residue protein sequence, read N- to C-terminus: DNA-directed RNA polymerase subunit alpha (313 aa).

An alpha N-terminal domain (alpha-NTD) region spans residues 1-226 (MLEIEKPKIE…EHLQLFVNLN (226 aa)). The interval 243–313 (KEKLAEMPIE…MGLSLRKEEE (71 aa)) is alpha C-terminal domain (alpha-CTD).

It belongs to the RNA polymerase alpha chain family. Homodimer. The RNAP catalytic core consists of 2 alpha, 1 beta, 1 beta' and 1 omega subunit. When a sigma factor is associated with the core the holoenzyme is formed, which can initiate transcription.

The enzyme catalyses RNA(n) + a ribonucleoside 5'-triphosphate = RNA(n+1) + diphosphate. In terms of biological role, DNA-dependent RNA polymerase catalyzes the transcription of DNA into RNA using the four ribonucleoside triphosphates as substrates. This chain is DNA-directed RNA polymerase subunit alpha, found in Carboxydothermus hydrogenoformans (strain ATCC BAA-161 / DSM 6008 / Z-2901).